The primary structure comprises 686 residues: Delta-like protein 4 (686 aa).

Residues 1-26 form the signal peptide; that stretch reads MTPASRSACRWALLLLAVLWPQQRAA. The Extracellular segment spans residues 27-532; sequence GSGIFQLRLQ…GLPPSFPWVA (506 aa). 2 cysteine pairs are disulfide-bonded: Cys51-Cys55 and Cys62-Cys75. N-linked (GlcNAc...) asparagine glycans are attached at residues Asn79, Asn109, and Asn162. The DSL domain maps to 174–218; it reads VICSDNYYGESCSRLCKKRDDHFGHYECQPDGSLSCLPGWTGKYC. A disulfide bridge links Cys176 with Cys185. 2 interaction with Notch1 regions span residues 186–188 and 192–196; these read SRL and RDDHF. 26 disulfide bridges follow: Cys189–Cys201, Cys209–Cys218, Cys223–Cys234, Cys227–Cys240, Cys242–Cys251, Cys254–Cys265, Cys260–Cys271, Cys273–Cys282, Cys289–Cys301, Cys295–Cys311, Cys313–Cys322, Cys329–Cys340, Cys334–Cys349, Cys351–Cys360, Cys367–Cys378, Cys372–Cys389, Cys391–Cys400, Cys407–Cys418, Cys412–Cys427, Cys429–Cys438, Cys445–Cys456, Cys450–Cys465, Cys467–Cys476, Cys485–Cys496, Cys490–Cys507, and Cys509–Cys518. 8 EGF-like domains span residues 219–252, 253–283, 285–323, 325–361, 364–401, 403–439, 441–477, and 481–519; these read DQPI…RLCN, ECIP…LFCD, DLNY…EHCE, GLSK…QHCE, TLTC…SNCE, KVDR…THCE, HISD…RRCE, and THDA…SRCE. Asn297 carries N-linked (GlcNAc...) asparagine glycosylation. Residue Asn394 is glycosylated (N-linked (GlcNAc...) asparagine). A helical membrane pass occupies residues 533-553; sequence VSLGVGLVVLLVLLVMVVVAV. The Cytoplasmic segment spans residues 554–686; the sequence is RQLRLRRPDD…RNECVIATEV (133 aa).

In terms of assembly, interacts with NOTCH4. Interacts (via N-terminal DSL and MNNL domains) with NOTCH1 (via EGF-like domains). As to expression, expressed in vascular endothelium. Expressed in retina at least during embryogenesis.

Its subcellular location is the cell membrane. Functionally, involved in the Notch signaling pathway as Notch ligand. Activates NOTCH1 and NOTCH4. Involved in angiogenesis; negatively regulates endothelial cell proliferation and migration and angiogenic sprouting. Essential for retinal progenitor proliferation. Required for suppressing rod fates in late retinal progenitors as well as for proper generation of other retinal cell types. During spinal cord neurogenesis, inhibits V2a interneuron fate. This is Delta-like protein 4 (Dll4) from Mus musculus (Mouse).